A 225-amino-acid polypeptide reads, in one-letter code: uncharacterized protein (225 aa).

Positions 1 to 22 are cleaved as a signal peptide; sequence MLQHYSVSWKKGLAALCLLAVA. The 30-residue stretch at 161–190 folds into the 4Fe-4S ferredoxin-type domain; the sequence is GNLTAAEEKKTGCLVCLDSCPVGIVSNATY.

This is an uncharacterized protein from Escherichia coli (strain K12).